The following is a 168-amino-acid chain: Putative gustatory receptor clone PTE03 (168 aa).

At 1–25 (TTVPKMLINLQKQNKAISYAGCITQ) the chain is on the extracellular side. Cys-22 and Cys-104 are disulfide-bonded. Residues 26-45 (LSFVLLFAGMENFLLAAMAY) traverse the membrane as a helical segment. Residues 46–67 (DRYVAICKPLRYTAIMKAHLCL) lie on the Cytoplasmic side of the membrane. A helical membrane pass occupies residues 68–88 (VMTLLSLCISIVDALLHGLMI). Residues 89 to 121 (LRLSFCTFLEIPHYFCELYQVIKLSCSDTLINN) lie on the Extracellular side of the membrane. The chain crosses the membrane as a helical span at residues 122–143 (ILVYTMTSTLGGVPLGGIIFSY). Residues 144 to 165 (FKIISSILRMPSSGSRHRAFST) lie on the Cytoplasmic side of the membrane. Residues 166 to 168 (CGS) traverse the membrane as a helical segment.

The protein belongs to the G-protein coupled receptor 1 family. Tongue specific.

The protein localises to the cell membrane. Functionally, possible taste receptor. This is Putative gustatory receptor clone PTE03 (Olr1145) from Rattus norvegicus (Rat).